The primary structure comprises 395 residues: MNYQKELLIEAIQEDNLKEVQKLLQAGVNPNTLDEYGKLCIRSAINNENLDIVKVLLDYGADPNAIDKIKDPIILEAIRSRELGIINSLLKKGANPNVLDRHENPIILSALPRGVNIVNTLLNNGADPNQVDKNGNTALSIILERTGDINVDVTALLIEKVKEKALNLRNSNGETCLHLAAQQGKIQMFDKYLDYYQTVNITDKAGNTPLYWSKLLGHTEISDMLNKRAEELNETAYTKITKTERFEDLPPRPKIALSYNLEIGGRYANEEKTKLIYQGGDVEYIDFRAIVPESANTEKKINEEVINEAKQKAKELLAGKDALVIPGNNREVDKEVAKHFGGEVNIKTGQPDFARSLAEMVMAEVAIEKGMPIMGICGGHQIINTYLKVPILKEK.

ANK repeat units lie at residues 3–32 (YQKE…NPNT), 36–65 (YGKL…DPNA), 69–98 (IKDP…NPNV), 101–130 (RHEN…DPNQ), 134–166 (NGNT…EKAL), 172–201 (NGET…TVNI), and 205–234 (AGNT…ELNE). The 124-residue stretch at 272-395 (KTKLIYQGGD…YLKVPILKEK (124 aa)) folds into the Glutamine amidotransferase type-1 domain. The active-site Nucleophile is Cys377.

The chain is Putative ankyrin repeat protein RF_0950 from Rickettsia felis (strain ATCC VR-1525 / URRWXCal2) (Rickettsia azadi).